The following is a 254-amino-acid chain: DNA repair protein RecO (254 aa).

Belongs to the RecO family.

In terms of biological role, involved in DNA repair and RecF pathway recombination. This is DNA repair protein RecO from Verminephrobacter eiseniae (strain EF01-2).